The following is a 213-amino-acid chain: Adenylate kinase (213 aa).

Residue Gly-10–Thr-15 participates in ATP binding. The segment at Ala-30–Ile-59 is NMP. AMP-binding positions include Arg-36, Ala-57–Ile-59, Gly-85–Arg-88, and Gln-92. Positions Gly-123–Asp-161 are LID. Arg-124 is an ATP binding site. Positions 127 and 130 each coordinate Zn(2+). Ile-133–Tyr-134 contributes to the ATP binding site. Zn(2+)-binding residues include Cys-147 and Cys-150. AMP-binding residues include Arg-158 and Arg-169. An ATP-binding site is contributed by Lys-197.

This sequence belongs to the adenylate kinase family. As to quaternary structure, monomer.

It localises to the cytoplasm. The catalysed reaction is AMP + ATP = 2 ADP. Its pathway is purine metabolism; AMP biosynthesis via salvage pathway; AMP from ADP: step 1/1. Functionally, catalyzes the reversible transfer of the terminal phosphate group between ATP and AMP. Plays an important role in cellular energy homeostasis and in adenine nucleotide metabolism. This chain is Adenylate kinase, found in Rickettsia prowazekii (strain Madrid E).